We begin with the raw amino-acid sequence, 256 residues long: MKKDVLTLGGHEFSSRFILGSGKYNLNLIKAAVENAGAQMITLALRRANTSGGENILDFIPEGVTLLPNTSGARNAEEAVRIARLARAMNCGDFVKVEIIHDSKYLLPDNYETIKATEILAKEGFIVMPYMHADLNVARDLVNAGAACIMPLASPIGSNKGLATKEFIKILVDEIDLPIIVDAGIGRPSQACEAMEMGVAAVMANTAIATAGDIPAMAGAFKQAIEAGRAAYLSGLGRVLDKGASASSPLTGFLED.

Lys-96 acts as the Schiff-base intermediate with DXP in catalysis. 1-deoxy-D-xylulose 5-phosphate contacts are provided by residues Gly-157, 183–184 (AG), and 205–206 (NT).

It belongs to the ThiG family. In terms of assembly, homotetramer. Forms heterodimers with either ThiH or ThiS.

Its subcellular location is the cytoplasm. The enzyme catalyses [ThiS sulfur-carrier protein]-C-terminal-Gly-aminoethanethioate + 2-iminoacetate + 1-deoxy-D-xylulose 5-phosphate = [ThiS sulfur-carrier protein]-C-terminal Gly-Gly + 2-[(2R,5Z)-2-carboxy-4-methylthiazol-5(2H)-ylidene]ethyl phosphate + 2 H2O + H(+). Its pathway is cofactor biosynthesis; thiamine diphosphate biosynthesis. Catalyzes the rearrangement of 1-deoxy-D-xylulose 5-phosphate (DXP) to produce the thiazole phosphate moiety of thiamine. Sulfur is provided by the thiocarboxylate moiety of the carrier protein ThiS. In vitro, sulfur can be provided by H(2)S. The polypeptide is Thiazole synthase (Clostridium beijerinckii (strain ATCC 51743 / NCIMB 8052) (Clostridium acetobutylicum)).